Here is a 284-residue protein sequence, read N- to C-terminus: D-tagatose-1,6-bisphosphate aldolase subunit GatY (284 aa).

Catalysis depends on Asp-82, which acts as the Proton donor. His-83 and His-180 together coordinate Zn(2+). Gly-181 is a dihydroxyacetone phosphate binding site. His-208 contributes to the Zn(2+) binding site. Dihydroxyacetone phosphate contacts are provided by residues 209-211 and 230-233; these read GAS and NVAT.

It belongs to the class II fructose-bisphosphate aldolase family. TagBP aldolase GatY subfamily. Forms a complex with GatZ. Requires Zn(2+) as cofactor.

The enzyme catalyses D-tagatofuranose 1,6-bisphosphate = D-glyceraldehyde 3-phosphate + dihydroxyacetone phosphate. The protein operates within carbohydrate metabolism; D-tagatose 6-phosphate degradation; D-glyceraldehyde 3-phosphate and glycerone phosphate from D-tagatose 6-phosphate: step 2/2. Its function is as follows. Catalytic subunit of the tagatose-1,6-bisphosphate aldolase GatYZ, which catalyzes the reversible aldol condensation of dihydroxyacetone phosphate (DHAP or glycerone-phosphate) with glyceraldehyde 3-phosphate (G3P) to produce tagatose 1,6-bisphosphate (TBP). Requires GatZ subunit for full activity and stability. Is involved in the catabolism of galactitol. This is D-tagatose-1,6-bisphosphate aldolase subunit GatY from Escherichia coli O157:H7.